The primary structure comprises 651 residues: MSGELNGNDTSAQAAVSAGSVLEGAAFADEGEQHNESMKTLVLGALGVVYGDIGTSPIYAFREALHAAATNGILARSDILGVVSLIFWALTLVVTVKYVLFVLRADNNGEGGILSLMALVRGALKGRPDLILGVGICGAALFFGDAVITPAISVLSAMEGLEIVAPNLTPFVVPATVVILVTLFSVQKLGTGRVAIVFGPIMALWFVALGASGLWHIFDDPTVMAALNPYYAVRFLTVSPAVAFVTVGAVFLAMTGAEALYADLGHFGRKPIVRAWLWIVFPCLLLNYFGQAAFILSHGEAAALPFFQMIPSFALWPMVLLATAATVIASQAVITGAYSVARQAVQLNILPRLEIQHTSEKLHGQIYIPRVNLLLGLAVVILVLGFEKSSNLAAAYGIAVTGNMLVTTVLLYIVMTRIWNWRVSRALPIILGFLVIDMLFFSANIIKVHEGGWASIGIATVLVLIMWTWVRGTRHLFQKTRKAEVPLDLIVEQMAKRPPTIVPGTAVFLTGDPKSAPTALMHSLKHYKVLHENNVILTVVTASKPWVASADRARVSQYNERFMLVTLTFGYMQQPNIPRALGLCRRLGWKFDIMTTSFFLSRRSLKASVHSGMPLWQDKLFILLARTASDATEYFQIPTGRVVEIGTQVNI.

The next 12 helical transmembrane spans lie at 41-61 (LVLG…IYAF), 82-102 (VVSL…VLFV), 130-150 (LILG…VITP), 163-183 (IVAP…LVTL), 194-214 (VAIV…ASGL), 235-255 (FLTV…LAMT), 276-296 (WLWI…AFIL), 309-329 (MIPS…TVIA), 366-386 (IYIP…VLGF), 395-415 (AYGI…YIVM), 426-446 (ALPI…ANII), and 450-470 (EGGW…WTWV).

The protein belongs to the HAK/KUP transporter (TC 2.A.72) family.

It is found in the cell inner membrane. It carries out the reaction K(+)(in) + H(+)(in) = K(+)(out) + H(+)(out). Its function is as follows. Transport of potassium into the cell. Likely operates as a K(+):H(+) symporter. The sequence is that of Probable potassium transport system protein Kup from Brucella melitensis biotype 1 (strain ATCC 23456 / CCUG 17765 / NCTC 10094 / 16M).